The sequence spans 241 residues: MSQIIWGAYAQRNTEDHPPAYAPGYKTSVLRSPKNALISIAETLSEVTAPHFSADKFGPKDNDLILNYAKDGLPIGERVIVHGYVRDQFGRPVKNALVEVWQANASGRYRHPNDQYIGAMDPNFGGCGRMLTDDNGYYVFRTIKPGPYPWRNRINEWRPAHIHFSLIADGWAQRLISQFYFEGDTLIDSCPILKTIPSEQQRRALIALEDKSNFIEADSRCYRFDITLRGRRATYFENDLT.

Fe cation-binding residues include Tyr-109, Tyr-148, His-161, and His-163.

The protein belongs to the intradiol ring-cleavage dioxygenase family. The enzyme is an oligomer of 12 copies of the alpha and beta chains. Fe(3+) is required as a cofactor.

It catalyses the reaction 3,4-dihydroxybenzoate + O2 = 3-carboxy-cis,cis-muconate + 2 H(+). It functions in the pathway aromatic compound metabolism; beta-ketoadipate pathway; 3-carboxy-cis,cis-muconate from 3,4-dihydroxybenzoate: step 1/1. In terms of biological role, plays an essential role in the utilization of numerous aromatic and hydroaromatic compounds via the beta-ketoadipate pathway. The protein is Protocatechuate 3,4-dioxygenase beta chain (pcaH) of Acinetobacter baylyi (strain ATCC 33305 / BD413 / ADP1).